Reading from the N-terminus, the 1010-residue chain is Collagen, type I, alpha 1b (1010 aa).

Residues 1–24 are compositionally biased toward pro residues; it reads SSGPPQPGPMGPMGPRGPPGPPGS. Residues 1 to 969 are disordered; that stretch reads SSGPPQPGPM…PDGTQKSPAR (969 aa). The segment covering 25–48 has biased composition (low complexity); the sequence is SGPQGFTGPPGEPGEPGASGAMGS. Residues 58–72 are compositionally biased toward basic and acidic residues; that stretch reads NGDDGEPGKPGRPGE. The segment covering 73–82 has biased composition (low complexity); sequence RGAAGPQGAR. Residues 145 to 159 are compositionally biased toward pro residues; the sequence is GGPPGPTGPAGPPGF. Composition is skewed to gly residues over residues 160 to 179 and 203 to 212; these read PGGAGVKGETGPAGGRGNEG and GTDGGPGAKG. Low complexity-rich tracts occupy residues 213–268 and 300–310; these read SPGA…PGPA and ERGAPGARGFP. A compositionally biased stretch (gly residues) spans 311–323; sequence GADGGAGGKGAPG. 2 stretches are compositionally biased toward low complexity: residues 324-343 and 405-448; these read ERGATGESGSPGAPGAPGSK and PAGA…APGE. Gly residues-rich tracts occupy residues 468–477, 486–495, and 519–528; these read GAPGLGGPTG, GAPGGLGAPG, and GGKGGDGAPG. Composition is skewed to low complexity over residues 559–568 and 581–596; these read VAGPTGPRGA and AGFAGPPGADGQPGAK. 2 stretches are compositionally biased toward gly residues: residues 609 to 618 and 633 to 642; these read GAPGPGGPVG and GARGGAGPPG. Low complexity-rich tracts occupy residues 643–662, 679–701, and 796–805; these read ATGFPGPAGRVGPSGPAGAA, ETGAAGRPGEAGAAGAPGPSGEK, and APGAVGPSGK. Residues 834 to 847 show a composition bias toward basic and acidic residues; the sequence is KGDRGEAGEAGDRG. The span at 872–900 shows a compositional bias: low complexity; the sequence is PAGASGPAGPRGPAGSNGAAGKDGMNGLP. A compositionally biased stretch (pro residues) spans 918–933; sequence AGPPGPPGPAGPPGPP. Residues 982–1010 enclose the Fibrillar collagen NC1 domain; it reads RLPLLDLAPMDVGAPDQEFGVEVGPVCFL.

Belongs to the fibrillar collagen family.

It is found in the secreted. Its subcellular location is the extracellular space. The protein resides in the extracellular matrix. This Epinephelus marginatus (Dusky grouper) protein is Collagen, type I, alpha 1b.